Reading from the N-terminus, the 517-residue chain is MLSSRAQAARTAADKALQRFLRTGAAVRYKVMKNWGVIGGIAAALAAGIYVIWGPITERKKRRKGLVPGLVNLGNTCFMNSLLQGLSACPAFVKWLEEFTTQYSRDQQGPHTHQCLSLTLLNLLKALSCQEVTEDEVLDASCLLDVLRMYRWQISSFEEQDAHELFHVITSSLEDERDRQPRVTHLFDVHSLEQQSEMAPRQVTCHTRGSPHPTTNHWKSQHPFHGRLTSNMVCKHCEHQSPVRFDTFDSLSLSIPAATWGHPLTLDHCLHHFISSESVRDVVCDNCTKIEARGTLTGEKVEHQRSTFVKQLKLGKLPQCLCIHLQRLSWSSHGTPLKRHEHVQFNEFLMMDFYKYRLLGHKPSQHGPKATENPGSAPEVQDAQAAPKPGLSQPGAPKTQIFLNGACSPSLLPALPSPVAFPLPVVPDYSSSTYLFRLMAVVVHHGDMHSGHFVTYRRSPPSAKNPLSTSNQWLWISDDTVRKASLQEVLSSSAYLLFYERVLSRVQQQGREYRSEE.

The Mitochondrial intermembrane portion of the chain corresponds to 1–35 (MLSSRAQAARTAADKALQRFLRTGAAVRYKVMKNW). A helical transmembrane segment spans residues 36–56 (GVIGGIAAALAAGIYVIWGPI). Over 57–517 (TERKKRRKGL…QQGREYRSEE (461 aa)) the chain is Cytoplasmic. Positions 68–502 (PGLVNLGNTC…SAYLLFYERV (435 aa)) constitute a USP domain. Catalysis depends on Cys77, which acts as the Nucleophile. Residues 198 to 221 (MAPRQVTCHTRGSPHPTTNHWKSQ) are disordered. Over residues 204-218 (TCHTRGSPHPTTNHW) the composition is skewed to polar residues. Glycyl lysine isopeptide (Lys-Gly) (interchain with G-Cter in ubiquitin) cross-links involve residues Lys235 and Lys289. The tract at residues 364-395 (SQHGPKATENPGSAPEVQDAQAAPKPGLSQPG) is disordered. His452 acts as the Proton acceptor in catalysis.

The protein belongs to the peptidase C19 family. In terms of processing, ubiquitinated by parkin (PRKN) at Lys-235 and Lys-289, leading to its degradation.

It localises to the mitochondrion outer membrane. It catalyses the reaction Thiol-dependent hydrolysis of ester, thioester, amide, peptide and isopeptide bonds formed by the C-terminal Gly of ubiquitin (a 76-residue protein attached to proteins as an intracellular targeting signal).. Its activity is regulated as follows. Inhibited by the diterpenoid derivative 15-oxospiramilactone (S3). Its function is as follows. Deubiquitinating enzyme tethered to the mitochondrial outer membrane that acts as a key inhibitor of mitophagy by counteracting the action of parkin (PRKN): hydrolyzes ubiquitin attached by parkin on target proteins, such as RHOT1/MIRO1 and TOMM20, thereby blocking parkin's ability to drive mitophagy. Preferentially cleaves 'Lys-6'- and 'Lys-11'-linked polyubiquitin chains, 2 types of linkage that participate in mitophagic signaling. Does not cleave efficiently polyubiquitin phosphorylated at 'Ser-65'. Acts as negative regulator of mitochondrial fusion by mediating deubiquitination of MFN1 and MFN2. The protein is Ubiquitin carboxyl-terminal hydrolase 30 (Usp30) of Mus musculus (Mouse).